We begin with the raw amino-acid sequence, 179 residues long: MKQFLDFLPLVVFFAFYKLYDIYAATTALIVATAIVLIYSWVRYRKVEKMALITFVLVAVFGGLTLFFHNDEFIKWKVTVIYALFAGALLFSQWVMKKPLIQRMLGKELALPQQVWSRLNLAWAVFFILCGLANIYIAFWLPQNIWVNFKVFGLTALTLVFTLLSGIYIYRHMPQDDHH.

The next 5 membrane-spanning stretches (helical) occupy residues Ile-22–Val-42, Met-50–Asn-70, Trp-76–Met-96, Leu-121–Leu-141, and Phe-149–Ile-169.

Belongs to the YciB family.

It is found in the cell inner membrane. Plays a role in cell envelope biogenesis, maintenance of cell envelope integrity and membrane homeostasis. This chain is Inner membrane-spanning protein YciB, found in Klebsiella pneumoniae (strain 342).